The chain runs to 959 residues: Protein NLP7 (959 aa).

Positions 1 to 22 (MCEPDDNSARNGVTTQPSRSRE) are disordered. The segment covering 9–18 (ARNGVTTQPS) has biased composition (polar residues). Residues 578 to 659 (KKKTEKKRGK…IESVQGTDGG (82 aa)) form the RWP-RK domain. Residues 633-654 (SRKIKKVNRSITKLKRVIESVQ) adopt a coiled-coil conformation. 3 stretches are compositionally biased toward polar residues: residues 673–687 (THGQ…SPNG), 694–703 (PNTNNSPNHW), and 735–745 (GTPTSHGSCDG). The disordered stretch occupies residues 673–760 (THGQTSAQPL…PKVPNQDPLF (88 aa)). Residues 863-945 (TVTIKASYKD…KIVRLLVHDV (83 aa)) form the PB1 domain.

Interacts with NRG2. Expressed in roots, stems, leaves, flowers and siliques. Detected in root hairs, emerging secondary roots, vascular tissues, leaf parenchyma cells and stomata.

The protein localises to the nucleus. In terms of biological role, transcription factor involved in regulation of nitrate assimilation and in transduction of the nitrate signal. In Arabidopsis thaliana (Mouse-ear cress), this protein is Protein NLP7 (NLP7).